The primary structure comprises 209 residues: Glutathione S-transferase 1-1 (209 aa).

A GST N-terminal domain is found at 1–81 (MADFYYLPGS…YLVEKYGKTD (81 aa)). Glutathione contacts are provided by residues Ser10, 51–53 (HTI), and 65–67 (ESR). Positions 87–209 (CPKKRAVINQ…GCLEFKKYFE (123 aa)) constitute a GST C-terminal domain.

The protein belongs to the GST superfamily. Theta family. Homodimer.

The catalysed reaction is RX + glutathione = an S-substituted glutathione + a halide anion + H(+). It carries out the reaction 1,1,1-trichloro-2,2-bis(4-chlorophenyl)ethane = 1,1-dichloro-2,2-bis(4-chlorophenyl)ethylene + chloride + H(+). Conjugation of reduced glutathione to a wide number of exogenous and endogenous hydrophobic electrophiles. Has DDT dehydrochlorinase activity. This Drosophila simulans (Fruit fly) protein is Glutathione S-transferase 1-1 (GstD1).